Here is a 332-residue protein sequence, read N- to C-terminus: 2,3-diketo-L-gulonate reductase (332 aa).

His-44 functions as the Proton donor in the catalytic mechanism. NAD(+) is bound by residues 168–174, 224–225, and 304–306; these read ITMVDMS, WK, and GHE.

Belongs to the LDH2/MDH2 oxidoreductase family. DlgD subfamily. Homodimer.

The protein localises to the cytoplasm. The enzyme catalyses 3-dehydro-L-gulonate + NAD(+) = 2,3-dioxo-L-gulonate + NADH + H(+). It catalyses the reaction 3-dehydro-L-gulonate + NADP(+) = 2,3-dioxo-L-gulonate + NADPH + H(+). In terms of biological role, catalyzes the reduction of 2,3-diketo-L-gulonate in the presence of NADH, to form 3-keto-L-gulonate. The chain is 2,3-diketo-L-gulonate reductase from Pasteurella multocida (strain Pm70).